A 699-amino-acid polypeptide reads, in one-letter code: Elongation factor G (699 aa).

The region spanning 8–290 (NKYRNLGIMA…KVIELLPSPV (283 aa)) is the tr-type G domain. GTP-binding positions include 17 to 24 (AHIDAGKT), 88 to 92 (DTPGH), and 142 to 145 (NKMD).

It belongs to the TRAFAC class translation factor GTPase superfamily. Classic translation factor GTPase family. EF-G/EF-2 subfamily.

The protein localises to the cytoplasm. Catalyzes the GTP-dependent ribosomal translocation step during translation elongation. During this step, the ribosome changes from the pre-translocational (PRE) to the post-translocational (POST) state as the newly formed A-site-bound peptidyl-tRNA and P-site-bound deacylated tRNA move to the P and E sites, respectively. Catalyzes the coordinated movement of the two tRNA molecules, the mRNA and conformational changes in the ribosome. This Dichelobacter nodosus (strain VCS1703A) protein is Elongation factor G.